We begin with the raw amino-acid sequence, 212 residues long: Interleukin-6 (212 aa).

Residues 1–29 form the signal peptide; that stretch reads MNSLSTSAFSPVAFSLGLLLVMATAFPTP. An intrachain disulfide couples cysteine 72 to cysteine 78. Serine 81 carries the post-translational modification Phosphoserine. An intrachain disulfide couples cysteine 101 to cysteine 111. A disordered region spans residues 156–175; the sequence is QKGKNPDKATTPNPTTNAGL. Polar residues predominate over residues 163–175; it reads KATTPNPTTNAGL.

Belongs to the IL-6 superfamily. In terms of assembly, component of a hexamer of two molecules each of IL6, IL6R and IL6ST; first binds to IL6R to associate with the signaling subunit IL6ST. Interacts with IL6R (via the N-terminal ectodomain); this interaction may be affected by IL6R-binding with SORL1, hence decreasing IL6 cis signaling. Interacts with SORL1 (via the N-terminal ectodomain); this interaction leads to IL6 internalization and lysosomal degradation. May form a trimeric complex with the soluble SORL1 ectodomain and soluble IL6R receptor; this interaction might stabilize circulating IL6, hence promoting IL6 trans signaling.

It is found in the secreted. Functionally, cytokine with a wide variety of biological functions in immunity, tissue regeneration, and metabolism. Binds to IL6R, then the complex associates to the signaling subunit IL6ST/gp130 to trigger the intracellular IL6-signaling pathway. The interaction with the membrane-bound IL6R and IL6ST stimulates 'classic signaling', whereas the binding of IL6 and soluble IL6R to IL6ST stimulates 'trans-signaling'. Alternatively, 'cluster signaling' occurs when membrane-bound IL6:IL6R complexes on transmitter cells activate IL6ST receptors on neighboring receiver cells. IL6 is a potent inducer of the acute phase response. Rapid production of IL6 contributes to host defense during infection and tissue injury, but excessive IL6 synthesis is involved in disease pathology. In the innate immune response, is synthesized by myeloid cells, such as macrophages and dendritic cells, upon recognition of pathogens through toll-like receptors (TLRs) at the site of infection or tissue injury. In the adaptive immune response, is required for the differentiation of B cells into immunoglobulin-secreting cells. Plays a major role in the differentiation of CD4(+) T cell subsets. Essential factor for the development of T follicular helper (Tfh) cells that are required for the induction of germinal-center formation. Required to drive naive CD4(+) T cells to the Th17 lineage. Also required for proliferation of myeloma cells and the survival of plasmablast cells. Its function is as follows. Acts as an essential factor in bone homeostasis and on vessels directly or indirectly by induction of VEGF, resulting in increased angiogenesis activity and vascular permeability. Induces, through 'trans-signaling' and synergistically with IL1B and TNF, the production of VEGF. Involved in metabolic controls, is discharged into the bloodstream after muscle contraction increasing lipolysis and improving insulin resistance. 'Trans-signaling' in central nervous system also regulates energy and glucose homeostasis. Mediates, through GLP-1, crosstalk between insulin-sensitive tissues, intestinal L cells and pancreatic islets to adapt to changes in insulin demand. Also acts as a myokine. Plays a protective role during liver injury, being required for maintenance of tissue regeneration. Also has a pivotal role in iron metabolism by regulating HAMP/hepcidin expression upon inflammation or bacterial infection. Through activation of IL6ST-YAP-NOTCH pathway, induces inflammation-induced epithelial regeneration. The polypeptide is Interleukin-6 (IL6) (Sus scrofa (Pig)).